A 391-amino-acid chain; its full sequence is 4-hydroxy-3-methylbut-2-en-1-yl diphosphate synthase (flavodoxin) (391 aa).

[4Fe-4S] cluster-binding residues include cysteine 281, cysteine 284, cysteine 316, and glutamate 323. The disordered stretch occupies residues 372-391; the sequence is EMGGEDGQGGIKGSPVVSVS.

The protein belongs to the IspG family. [4Fe-4S] cluster is required as a cofactor.

It carries out the reaction (2E)-4-hydroxy-3-methylbut-2-enyl diphosphate + oxidized [flavodoxin] + H2O + 2 H(+) = 2-C-methyl-D-erythritol 2,4-cyclic diphosphate + reduced [flavodoxin]. Its pathway is isoprenoid biosynthesis; isopentenyl diphosphate biosynthesis via DXP pathway; isopentenyl diphosphate from 1-deoxy-D-xylulose 5-phosphate: step 5/6. Converts 2C-methyl-D-erythritol 2,4-cyclodiphosphate (ME-2,4cPP) into 1-hydroxy-2-methyl-2-(E)-butenyl 4-diphosphate. This chain is 4-hydroxy-3-methylbut-2-en-1-yl diphosphate synthase (flavodoxin), found in Renibacterium salmoninarum (strain ATCC 33209 / DSM 20767 / JCM 11484 / NBRC 15589 / NCIMB 2235).